Reading from the N-terminus, the 44-residue chain is Large ribosomal subunit protein bL34 (44 aa).

It belongs to the bacterial ribosomal protein bL34 family.

The chain is Large ribosomal subunit protein bL34 from Variovorax paradoxus (strain S110).